A 396-amino-acid polypeptide reads, in one-letter code: Elongation factor Tu (396 aa).

Positions 10-206 (KPHVNIGTIG…AVDAYIPEPE (197 aa)) constitute a tr-type G domain. A G1 region spans residues 19–26 (GHVDHGKT). 19-26 (GHVDHGKT) is a GTP binding site. T26 contributes to the Mg(2+) binding site. A G2 region spans residues 60–64 (GITIA). Positions 81–84 (DCPG) are G3. GTP-binding positions include 81 to 85 (DCPGH) and 136 to 139 (NKAD). A G4 region spans residues 136-139 (NKAD). Residues 174-176 (SAL) are G5.

Belongs to the TRAFAC class translation factor GTPase superfamily. Classic translation factor GTPase family. EF-Tu/EF-1A subfamily. In terms of assembly, monomer.

The protein localises to the cytoplasm. It catalyses the reaction GTP + H2O = GDP + phosphate + H(+). Its function is as follows. GTP hydrolase that promotes the GTP-dependent binding of aminoacyl-tRNA to the A-site of ribosomes during protein biosynthesis. This chain is Elongation factor Tu, found in Geobacter metallireducens (strain ATCC 53774 / DSM 7210 / GS-15).